The primary structure comprises 632 residues: Phosphatidylinositol-3,5-bisphosphate 3-phosphatase MTMR8 (632 aa).

One can recognise a Myotubularin phosphatase domain in the interval 126-500; that stretch reads GWELISVVND…LHFKFWCGMY (375 aa). Residues Asn-250, Asn-275, and Ile-276 each coordinate a 1,2-diacyl-sn-glycero-3-phospho-(1D-myo-inositol-3,5-bisphosphate). Residues Asn-250, Asn-275, and Ile-276 each contribute to the a 1,2-diacyl-sn-glycero-3-phospho-(1D-myo-inositol-3-phosphate) site. The Phosphocysteine intermediate role is filled by Cys-338. A 1,2-diacyl-sn-glycero-3-phospho-(1D-myo-inositol-3,5-bisphosphate) is bound by residues Ser-339, Asp-340, Gly-341, Trp-342, Asp-343, Arg-344, Lys-380, and Arg-384. A 1,2-diacyl-sn-glycero-3-phospho-(1D-myo-inositol-3-phosphate)-binding residues include Ser-339, Asp-340, Gly-341, Trp-342, Asp-343, and Arg-344. Residues Ser-339 and Asp-340 each contribute to the phosphate site. The phosphate site is built by Trp-342, Asp-343, and Arg-344. An a 1,2-diacyl-sn-glycero-3-phospho-(1D-myo-inositol-3-phosphate)-binding site is contributed by Arg-384. The disordered stretch occupies residues 545–632; it reads LPDPAGPINT…HSKEEVQESS (88 aa). Positions 602-632 are enriched in basic and acidic residues; it reads EPAANEHDLSSKDKPVFVETEHSKEEVQESS.

It belongs to the protein-tyrosine phosphatase family. Non-receptor class myotubularin subfamily. As to quaternary structure, homodimer.

It is found in the nucleus envelope. The catalysed reaction is a 1,2-diacyl-sn-glycero-3-phospho-(1D-myo-inositol-3,5-bisphosphate) + H2O = a 1,2-diacyl-sn-glycero-3-phospho-(1D-myo-inositol-5-phosphate) + phosphate. The enzyme catalyses a 1,2-diacyl-sn-glycero-3-phospho-(1D-myo-inositol-3-phosphate) + H2O = a 1,2-diacyl-sn-glycero-3-phospho-(1D-myo-inositol) + phosphate. It catalyses the reaction 1,2-dioctanoyl-sn-glycero-3-phospho-(1D-myo-inositol-3,5-bisphosphate) + H2O = 1,2-dioctanoyl-sn-glycero-3-phospho-(1D-myo-inositol-5-phosphate) + phosphate. In terms of biological role, lipid phosphatase that specifically dephosphorylates the D-3 position of phosphatidylinositol 3-phosphate and phosphatidylinositol 3,5-bisphosphate, generating phosphatidylinositol and phosphatidylinositol 5-phosphate. This chain is Phosphatidylinositol-3,5-bisphosphate 3-phosphatase MTMR8 (mtmr8), found in Danio rerio (Zebrafish).